The sequence spans 112 residues: High mobility group protein D (112 aa).

The segment at residues 5 to 71 (PKRPLSAYML…DYDRAVKEFE (67 aa)) is a DNA-binding region (HMG box). Position 10 is a phosphoserine (Ser-10). Tyr-12 bears the Phosphotyrosine mark. The tract at residues 72-112 (ANGGSSAANGGGAKKRAKPAKKVAKKSKKEESDEDDDDESE) is disordered. A compositionally biased stretch (basic residues) spans 84–98 (AKKRAKPAKKVAKKS). Residues Ser-103 and Ser-111 each carry the phosphoserine modification. Residues 103-112 (SDEDDDDESE) are compositionally biased toward acidic residues.

Belongs to the HMGB family.

It localises to the nucleus. Its subcellular location is the chromosome. Its function is as follows. Binds preferentially single-stranded DNA and unwinds double-stranded DNA. Prefers sites containing the sequence 5'-ttg-3'. Facilitates DNA bending. Associated with early embryonic chromatin in the absence of histone H1. This Drosophila melanogaster (Fruit fly) protein is High mobility group protein D (HmgD).